Reading from the N-terminus, the 464-residue chain is MSSGRIIQIIGAVIDVEFERNSVPKIYDALQVDGTETTLEVQQQLGDGVVRTIAMGSTEGLKRGLNVTSTNAPISVPVGPATLGRIMDVLGRPIDEAGPVATEERLPIHRQAPSYAEQAASTDLLETGIKVIDLLCPFAKGGKVGLFGGAGVGKTVNMMELINNIAKAHSGLSVFAGVGERTREGNDFYHEMKDSNVLDKVAMVYGQMNEPPGNRLRVALTGLTMAEYFRDQKDENGKGRDVLLFVDNIYRYTLAGTEVSALLGRMPSAVGYQPTLAEEMGVLQERITSTKSGSITSIQAVYVPADDLTDPSPATTFAHLDATVVLSRDIASSGIYPAIDPLDSTSRQLDPLVVGQEHYEIARSVQNVLQRYKELKDIIAILGMDELAEEDKLVVYRARKIQRFFSQPFHVAEVFTGAPGKLVPLKETIRGFKGLLAGEYDHIPEQAFYMVGGIDEVIAKAEKL.

148–155 is an ATP binding site; sequence GGAGVGKT.

It belongs to the ATPase alpha/beta chains family. F-type ATPases have 2 components, CF(1) - the catalytic core - and CF(0) - the membrane proton channel. CF(1) has five subunits: alpha(3), beta(3), gamma(1), delta(1), epsilon(1). CF(0) has three main subunits: a(1), b(2) and c(9-12). The alpha and beta chains form an alternating ring which encloses part of the gamma chain. CF(1) is attached to CF(0) by a central stalk formed by the gamma and epsilon chains, while a peripheral stalk is formed by the delta and b chains.

The protein localises to the cell inner membrane. It catalyses the reaction ATP + H2O + 4 H(+)(in) = ADP + phosphate + 5 H(+)(out). Produces ATP from ADP in the presence of a proton gradient across the membrane. The catalytic sites are hosted primarily by the beta subunits. This is ATP synthase subunit beta from Acinetobacter baylyi (strain ATCC 33305 / BD413 / ADP1).